Here is a 706-residue protein sequence, read N- to C-terminus: MEKTFNLTRRDDGIAILTMDVPGETMNTLKAQFGPEISEILAEIKSDPHIRGLVLISGKKDSFVAGADISMLDACKTAGDAKALSQQGHVVFNELEALKIPVVAAIHGACLGGGLELALACHQRVCSDDGKTMLGVPEVQLGLLPGGGGTQRLPRLVGITTALDMMLTGKQIRSKQALKMGLVNDVVPQTILLQTAVEMALTGKRAPKPVKKSLVNQVLEGTSFGRNIIFDQATKQVEKKTQGNYPAPAKIIDCVRQGIAKGMQKGLEVEASHFAELVVSKESEALRSIFFATTEMKKETGAEGATPRKVKKAVILGGGLMGGGIASVTTTKAKIPVRVKDISEKGLSNALAYAYKLLDKGVKRRHMTPAARDNLMALMTTTTEYKGVKDADIIVEAVFEDLALKHQMVKDIERECGEHTIFASNTSSLPISQIAEAATRPENVIGLHYFSPVEKMPLVEVIAHAKTSPETIATTVAFARKQGKTPIVVQDGAGFYVNRILALYMNEAAQLLLEGQSVEHLDKALVKFGFPVGPITLLDEVGIDVGAKISPILEKELGERFKAPAAFDKLLGDDRKGRKNGKGFYQYGASSKKTKAVDETVYGVLGIKPGTNKDAKALAERCVVQMLNEAVRCLDDGIIASPRDGDIGAIFGIGFPPFLGGPFHYIDTLGAANLVKILESYQSQFGNRFEPCERLKTMARENVSFF.

The segment at Met1–Pro188 is enoyl-CoA hydratase. Residues Arg308–Phe706 are 3-hydroxyacyl-CoA dehydrogenase.

It in the N-terminal section; belongs to the enoyl-CoA hydratase/isomerase family. This sequence in the central section; belongs to the 3-hydroxyacyl-CoA dehydrogenase family. Heterotetramer of two alpha chains (FadJ) and two beta chains (FadI).

The protein localises to the cytoplasm. The catalysed reaction is a (3S)-3-hydroxyacyl-CoA = a (2E)-enoyl-CoA + H2O. It carries out the reaction a 4-saturated-(3S)-3-hydroxyacyl-CoA = a (3E)-enoyl-CoA + H2O. The enzyme catalyses a (3S)-3-hydroxyacyl-CoA + NAD(+) = a 3-oxoacyl-CoA + NADH + H(+). It catalyses the reaction (3S)-3-hydroxybutanoyl-CoA = (3R)-3-hydroxybutanoyl-CoA. It functions in the pathway lipid metabolism; fatty acid beta-oxidation. Functionally, catalyzes the formation of a hydroxyacyl-CoA by addition of water on enoyl-CoA. Also exhibits 3-hydroxyacyl-CoA epimerase and 3-hydroxyacyl-CoA dehydrogenase activities. The sequence is that of Fatty acid oxidation complex subunit alpha from Shewanella sp. (strain W3-18-1).